The following is a 347-amino-acid chain: GTPase Obg (347 aa).

Residues Met-1–Ile-159 form the Obg domain. The OBG-type G domain maps to Ala-160 to Gly-328. GTP contacts are provided by residues Gly-166–Ser-173, Phe-191–Gln-195, Asp-213–Gly-216, Asn-280–Asp-283, and Ser-309–Ile-311. Residues Ser-173 and Thr-193 each contribute to the Mg(2+) site.

This sequence belongs to the TRAFAC class OBG-HflX-like GTPase superfamily. OBG GTPase family. In terms of assembly, monomer. Mg(2+) serves as cofactor.

The protein resides in the cytoplasm. In terms of biological role, an essential GTPase which binds GTP, GDP and possibly (p)ppGpp with moderate affinity, with high nucleotide exchange rates and a fairly low GTP hydrolysis rate. Plays a role in control of the cell cycle, stress response, ribosome biogenesis and in those bacteria that undergo differentiation, in morphogenesis control. The polypeptide is GTPase Obg (Synechococcus sp. (strain JA-2-3B'a(2-13)) (Cyanobacteria bacterium Yellowstone B-Prime)).